The primary structure comprises 138 residues: Small ribosomal subunit protein uS11c (138 aa).

Positions Met-1 to Arg-23 are disordered. Over residues Gly-9–Arg-23 the composition is skewed to basic residues.

Belongs to the universal ribosomal protein uS11 family. In terms of assembly, part of the 30S ribosomal subunit.

The protein resides in the plastid. The protein localises to the chloroplast. In Daucus carota (Wild carrot), this protein is Small ribosomal subunit protein uS11c.